The chain runs to 693 residues: Glycine--tRNA ligase beta subunit (693 aa).

It belongs to the class-II aminoacyl-tRNA synthetase family. Tetramer of two alpha and two beta subunits.

It is found in the cytoplasm. The catalysed reaction is tRNA(Gly) + glycine + ATP = glycyl-tRNA(Gly) + AMP + diphosphate. This is Glycine--tRNA ligase beta subunit from Vibrio vulnificus (strain CMCP6).